The primary structure comprises 117 residues: Large ribosomal subunit protein bL17 (117 aa).

Belongs to the bacterial ribosomal protein bL17 family. As to quaternary structure, part of the 50S ribosomal subunit. Contacts protein L32.

This Neorickettsia sennetsu (strain ATCC VR-367 / Miyayama) (Ehrlichia sennetsu) protein is Large ribosomal subunit protein bL17.